A 3106-amino-acid polypeptide reads, in one-letter code: Cilia- and flagella-associated protein 54 (3106 aa).

Composition is skewed to low complexity over residues 1-24 (MASSRSSSSSSEESPDSETSVSPV), 34-48 (STAVLKSPSESKSSS), and 2356-2368 (ESCSPTSPETSTT). Disordered stretches follow at residues 1-58 (MASS…THSE) and 2354-2374 (PEESCSPTSPETSTTESKDDS).

This sequence belongs to the CFAP54 family. In terms of tissue distribution, expressed at high level in the testis and at a low level in the lung and brain.

The protein localises to the cytoplasm. The protein resides in the cytoskeleton. Its subcellular location is the cilium axoneme. Required for assembly and function of cilia and flagella. In Mus musculus (Mouse), this protein is Cilia- and flagella-associated protein 54.